We begin with the raw amino-acid sequence, 184 residues long: Large ribosomal subunit protein uL15 (184 aa).

The disordered stretch occupies residues 1–55 (MDLSSLSPAKGSVKNKKRVGRGQGSGNGTTAGKGNKGQQSRSGYKRPVSEGGQMP). Residues 21–35 (RGQGSGNGTTAGKGN) show a composition bias toward gly residues.

This sequence belongs to the universal ribosomal protein uL15 family. As to quaternary structure, part of the 50S ribosomal subunit.

Functionally, binds to the 23S rRNA. In Prosthecochloris aestuarii (strain DSM 271 / SK 413), this protein is Large ribosomal subunit protein uL15.